We begin with the raw amino-acid sequence, 522 residues long: 2-isopropylmalate synthase (522 aa).

A Pyruvate carboxyltransferase domain is found at 5–267; the sequence is VIIFDTTLRD…HTRINHQEIY (263 aa). Mn(2+) is bound by residues aspartate 14, histidine 202, histidine 204, and asparagine 238. Positions 392–522 are regulatory domain; sequence RLDTFNVQSG…SQVKDQKETV (131 aa).

Belongs to the alpha-IPM synthase/homocitrate synthase family. LeuA type 1 subfamily. In terms of assembly, homodimer. Mn(2+) is required as a cofactor.

It localises to the cytoplasm. The enzyme catalyses 3-methyl-2-oxobutanoate + acetyl-CoA + H2O = (2S)-2-isopropylmalate + CoA + H(+). It participates in amino-acid biosynthesis; L-leucine biosynthesis; L-leucine from 3-methyl-2-oxobutanoate: step 1/4. In terms of biological role, catalyzes the condensation of the acetyl group of acetyl-CoA with 3-methyl-2-oxobutanoate (2-ketoisovalerate) to form 3-carboxy-3-hydroxy-4-methylpentanoate (2-isopropylmalate). The polypeptide is 2-isopropylmalate synthase (Erwinia tasmaniensis (strain DSM 17950 / CFBP 7177 / CIP 109463 / NCPPB 4357 / Et1/99)).